We begin with the raw amino-acid sequence, 941 residues long: Zinc finger protein 507 (941 aa).

Serine 95 carries the post-translational modification Phosphoserine. 2 consecutive C2H2-type zinc fingers follow at residues 122 to 144 and 152 to 175; these read YQCSLCKFLSPSFSVLKEHVKQH and LMCSECHATSRSQQELEAHVVSEH. The span at 165–177 shows a compositional bias: basic and acidic residues; sequence QELEAHVVSEHEN. Residues 165-198 form a disordered region; sequence QELEAHVVSEHENSASSQARSSPSGQGATERKSE. A compositionally biased stretch (low complexity) spans 178–192; it reads SASSQARSSPSGQGA. Residues 237–259 form a C2H2-type 3 zinc finger; that stretch reads YRCLFCSYTCGQQRMLKTHAWKH. Residue serine 415 is modified to Phosphoserine. The segment at 455–477 is disordered; that stretch reads ELSKGLAPDENAPPGRRRTNSES. 5 consecutive C2H2-type zinc fingers follow at residues 630–652, 658–680, 686–709, 746–768, and 774–796; these read YRCRLCNYSSGNRGYIKQHLRVH, YQCPICEHIAENSKDLESHMINH, HQCKQCKESFHYKSQLRNHEREQH, YRCDVCDYTSTTYVGVRNHRRVH, and YRCSLCGYVCSHPPSLKSHMWKH. The tract at residues 823 to 856 is disordered; that stretch reads GKSRGKPLLTSSEERTGPTTGSPENLVSSSELTS. Polar residues predominate over residues 839–856; sequence GPTTGSPENLVSSSELTS. The C2H2-type 9 zinc finger occupies 899-921; the sequence is FCCCICGFESTSKESLLDHMKEH.

Belongs to the krueppel C2H2-type zinc-finger protein family.

The protein resides in the nucleus. Its function is as follows. May be involved in transcriptional regulation. The polypeptide is Zinc finger protein 507 (Znf507) (Mus musculus (Mouse)).